Reading from the N-terminus, the 191-residue chain is Glutathione-independent glyoxalase DJ-1 (191 aa).

Residues E16, C111, and H130 contribute to the active site.

It belongs to the peptidase C56 family.

The protein localises to the cytoplasm. It is found in the nucleus. It carries out the reaction methylglyoxal + H2O = (R)-lactate + H(+). In terms of biological role, catalyzes the conversion of methylglyoxal (MG) to D-lactate in a single glutathione (GSH)-independent step. May play a role in detoxifying endogenously produced glyoxals. Involved in protection against reactive oxygen species (ROS). In Schizosaccharomyces pombe (strain 972 / ATCC 24843) (Fission yeast), this protein is Glutathione-independent glyoxalase DJ-1.